The following is a 789-amino-acid chain: Aryl hydrocarbon receptor nuclear translocator (789 aa).

The segment covering Met-1–Val-14 has biased composition (polar residues). Positions Met-1–Ile-97 are disordered. At Ala-2 the chain carries N-acetylalanine. Residues Ser-26–Ala-35 are compositionally biased toward gly residues. Lys-58 is covalently cross-linked (Glycyl lysine isopeptide (Lys-Gly) (interchain with G-Cter in SUMO2)). Basic and acidic residues predominate over residues Leu-60 to Ile-97. Ser-77 is modified (phosphoserine). Residues Arg-88–Lys-128 form a DNA-binding region. Residues Leu-89–Leu-142 form the bHLH domain. The required for heterodimer formation with HIF1A stretch occupies residues Leu-112–Ile-168. Residues Leu-112 to Ile-264 are required for heterodimer formation with EPAS1. 2 PAS domains span residues Asp-161–Arg-235 and Pro-349–Lys-419. Positions Leu-167–Ala-171 are mediates the transcription activity and dimerization of the AHR:ARNT complex. In terms of domain architecture, PAC spans Ser-424–Ser-467. A compositionally biased stretch (polar residues) spans Lys-465–Arg-481. Disordered stretches follow at residues Lys-465–Leu-492 and Thr-672–Glu-789. Over residues Thr-672 to Ser-696 the composition is skewed to low complexity. Over residues Thr-708 to Thr-719 the composition is skewed to polar residues. Composition is skewed to low complexity over residues Val-723 to Gln-733 and Gln-743 to Pro-756.

Monomer. Homodimer only upon binding to a DNA. Efficient DNA binding requires dimerization with another bHLH protein. Interacts with TACC3. Interacts with HIF1A, EPAS1, NPAS1 and NPAS3; forms a heterodimer that binds core DNA sequence 5'-TACGTG-3' within the hypoxia response element (HRE) of target gene promoters. Forms a heterodimer with AHRR, as well as with other bHLH proteins. Interacts with NOCA7. Interacts with TACC3. Interacts with AHR; the heterodimer ARNT:AHR binds to core DNA sequence 5'-TGCGTG-3' within the dioxin response element (DRE) of target gene promoters and activates their transcription. Interacts with SIM1 and NPAS4.

The protein localises to the nucleus. Its function is as follows. Required for activity of the AHR. Upon ligand binding, AHR translocates into the nucleus, where it heterodimerizes with ARNT and induces transcription by binding to xenobiotic response elements (XRE). Not required for the ligand-binding subunit to translocate from the cytosol to the nucleus after ligand binding. The complex initiates transcription of genes involved in the regulation of a variety of biological processes, including angiogenesis, hematopoiesis, drug and lipid metabolism, cell motility and immune modulation. The heterodimer binds to core DNA sequence 5'-TACGTG-3' within the hypoxia response element (HRE) of target gene promoters and functions as a transcriptional regulator of the adaptive response to hypoxia. The heterodimer ARNT:AHR binds to core DNA sequence 5'-TGCGTG-3' within the dioxin response element (DRE) of target gene promoters and activates their transcription. The polypeptide is Aryl hydrocarbon receptor nuclear translocator (Homo sapiens (Human)).